The sequence spans 465 residues: Hepatocyte nuclear factor 6 (465 aa).

Disordered stretches follow at residues 15–84 (GVSH…GPLH) and 119–141 (SDKFPHHHHHHHHHHHPHHHQRL). Residues 123–140 (PHHHHHHHHHHHPHHHQR) show a composition bias toward basic residues. Residues 283–369 (GSNSGQMEEI…QRMSALRLAA (87 aa)) constitute a DNA-binding region (CUT). The segment at residues 385–444 (PKKPRLVFTDVQRRTLHAIFKENKRPSKELQITISQQLGLELSTVSNFFMNARRRSLDKW) is a DNA-binding region (homeobox). A disordered region spans residues 443 to 465 (KWQDEGGSNSGSSSSSSSTCTKA). The segment covering 448 to 465 (GGSNSGSSSSSSSTCTKA) has biased composition (low complexity).

It belongs to the CUT homeobox family. In terms of assembly, binds DNA as a monomer.

The protein resides in the nucleus. Transcriptional activator. Binds the consensus sequence 5'-DHWATTGAYTWWD-3' on a variety of gene promoters such as those of HNF3B and TTR. Important for liver genes transcription. Stimulates the expression of Onecut3 in the developing endoderm. The sequence is that of Hepatocyte nuclear factor 6 (Onecut1) from Mus musculus (Mouse).